Reading from the N-terminus, the 252-residue chain is Type II secretion system protein N (252 aa).

The Cytoplasmic portion of the chain corresponds to 1–4; sequence MKNR. The chain crosses the membrane as a helical span at residues 5 to 25; the sequence is LTIGLLLAAIYLFWLLLSAPA. Residues 26–252 lie on the Periplasmic side of the membrane; it reads RLLALTLSDD…QGEWLSEEKK (227 aa).

Belongs to the GSP N family.

It localises to the cell inner membrane. Involved in a type II secretion system (T2SS, formerly general secretion pathway, GSP) for the export of proteins. Required for the translocation of pullulanase. This is Type II secretion system protein N (pulN) from Klebsiella pneumoniae.